Here is a 341-residue protein sequence, read N- to C-terminus: HTH-type transcriptional repressor PurR (341 aa).

The HTH lacI-type domain maps to alanine 2–valine 56. The segment at residues isoleucine 4 to asparagine 23 is a DNA-binding region (H-T-H motif). The DNA-binding element occupies serine 48–valine 56. Positions 73, 190, 192, 221, and 275 each coordinate hypoxanthine.

In terms of assembly, homodimer.

The protein operates within purine metabolism; purine nucleotide biosynthesis [regulation]. Functionally, is the main repressor of the genes involved in the de novo synthesis of purine nucleotides, regulating purB, purC, purEK, purF, purHD, purL, purMN and guaBA expression. PurR is allosterically activated to bind its cognate DNA by binding the purine corepressors, hypoxanthine or guanine, thereby effecting transcription repression. The protein is HTH-type transcriptional repressor PurR of Edwardsiella ictaluri (strain 93-146).